A 433-amino-acid chain; its full sequence is Glutamate-1-semialdehyde 2,1-aminomutase (433 aa).

The residue at position 271 (Lys-271) is an N6-(pyridoxal phosphate)lysine.

This sequence belongs to the class-III pyridoxal-phosphate-dependent aminotransferase family. HemL subfamily. As to quaternary structure, homodimer. Pyridoxal 5'-phosphate is required as a cofactor.

It localises to the cytoplasm. The enzyme catalyses (S)-4-amino-5-oxopentanoate = 5-aminolevulinate. Its pathway is porphyrin-containing compound metabolism; protoporphyrin-IX biosynthesis; 5-aminolevulinate from L-glutamyl-tRNA(Glu): step 2/2. The protein operates within porphyrin-containing compound metabolism; chlorophyll biosynthesis. In Prochlorococcus marinus (strain MIT 9215), this protein is Glutamate-1-semialdehyde 2,1-aminomutase.